The primary structure comprises 336 residues: Eukaryotic translation initiation factor 3 subunit H (336 aa).

The 134-residue stretch at 21–154 folds into the MPN domain; it reads VQCDGLAAMK…LKAYRLTPQA (134 aa).

This sequence belongs to the eIF-3 subunit H family. Component of the eukaryotic translation initiation factor 3 (eIF-3) complex.

Its subcellular location is the cytoplasm. Its function is as follows. Component of the eukaryotic translation initiation factor 3 (eIF-3) complex, which is involved in protein synthesis of a specialized repertoire of mRNAs and, together with other initiation factors, stimulates binding of mRNA and methionyl-tRNAi to the 40S ribosome. The eIF-3 complex specifically targets and initiates translation of a subset of mRNAs involved in cell proliferation. In Aedes aegypti (Yellowfever mosquito), this protein is Eukaryotic translation initiation factor 3 subunit H.